The chain runs to 327 residues: Ran-specific GTPase-activating protein 2 (327 aa).

2 disordered regions span residues methionine 1 to aspartate 96 and glycine 109 to valine 205. The span at proline 24 to threonine 83 shows a compositional bias: basic and acidic residues. Threonine 31 is modified (phosphothreonine). Over residues alanine 122–aspartate 133 the composition is skewed to polar residues. A compositionally biased stretch (low complexity) spans phenylalanine 140–phenylalanine 152. Composition is skewed to basic and acidic residues over residues asparagine 157 to serine 179 and glutamate 189 to valine 205. Serine 179 carries the phosphoserine modification. The RanBD1 domain maps to threonine 191–lysine 327.

As to quaternary structure, interacts with GSP1, XPO1 and SRM1.

The protein resides in the nucleus. Functionally, important for the export of protein containing nuclear export signal (NES) out of the nucleus. Stimulates the GTPase activity of GSP1. This chain is Ran-specific GTPase-activating protein 2 (YRB2), found in Saccharomyces cerevisiae (strain ATCC 204508 / S288c) (Baker's yeast).